Here is a 216-residue protein sequence, read N- to C-terminus: Probable transaldolase (216 aa).

Catalysis depends on Lys83, which acts as the Schiff-base intermediate with substrate.

Belongs to the transaldolase family. Type 3B subfamily.

It localises to the cytoplasm. It carries out the reaction D-sedoheptulose 7-phosphate + D-glyceraldehyde 3-phosphate = D-erythrose 4-phosphate + beta-D-fructose 6-phosphate. It participates in carbohydrate degradation; pentose phosphate pathway; D-glyceraldehyde 3-phosphate and beta-D-fructose 6-phosphate from D-ribose 5-phosphate and D-xylulose 5-phosphate (non-oxidative stage): step 2/3. Functionally, transaldolase is important for the balance of metabolites in the pentose-phosphate pathway. The protein is Probable transaldolase of Sorangium cellulosum (strain So ce56) (Polyangium cellulosum (strain So ce56)).